Consider the following 159-residue polypeptide: SsrA-binding protein (159 aa).

This sequence belongs to the SmpB family.

It is found in the cytoplasm. Its function is as follows. Required for rescue of stalled ribosomes mediated by trans-translation. Binds to transfer-messenger RNA (tmRNA), required for stable association of tmRNA with ribosomes. tmRNA and SmpB together mimic tRNA shape, replacing the anticodon stem-loop with SmpB. tmRNA is encoded by the ssrA gene; the 2 termini fold to resemble tRNA(Ala) and it encodes a 'tag peptide', a short internal open reading frame. During trans-translation Ala-aminoacylated tmRNA acts like a tRNA, entering the A-site of stalled ribosomes, displacing the stalled mRNA. The ribosome then switches to translate the ORF on the tmRNA; the nascent peptide is terminated with the 'tag peptide' encoded by the tmRNA and targeted for degradation. The ribosome is freed to recommence translation, which seems to be the essential function of trans-translation. This is SsrA-binding protein from Acidothermus cellulolyticus (strain ATCC 43068 / DSM 8971 / 11B).